Consider the following 510-residue polypeptide: GMP synthase [glutamine-hydrolyzing] (510 aa).

Residues 5–195 (LVLVVDFGGQ…LFNVCNLKGD (191 aa)) form the Glutamine amidotransferase type-1 domain. Residue Cys-82 is the Nucleophile of the active site. Active-site residues include His-169 and Glu-171. The GMPS ATP-PPase domain occupies 196 to 385 (WSMSSFAEQQ…LGIPHKLVWR (190 aa)). 223 to 229 (SGGVDSS) contacts ATP.

Homodimer.

The catalysed reaction is XMP + L-glutamine + ATP + H2O = GMP + L-glutamate + AMP + diphosphate + 2 H(+). It participates in purine metabolism; GMP biosynthesis; GMP from XMP (L-Gln route): step 1/1. Its function is as follows. Catalyzes the synthesis of GMP from XMP. The chain is GMP synthase [glutamine-hydrolyzing] from Clostridium botulinum (strain Kyoto / Type A2).